The sequence spans 248 residues: MKKIVLLRHGESAWNKENRFTGWTDVDLTEKGVAEAEKAGVTLREYGFNFDKAYTSYLKRAVKTLNCVLDKMNLDWIPVEKSWRLNEKHYGDLQGLNKAETAEKYGEEQVLIWRRSYDIAPNPLSESDLRNPRFDYRYHEVSDAELPRTESLKDTIDRIMPYWESDIFPALKDAHTLLVVAHGNSLRGIIKHLKHISDEDIIKLNLPTAVPYVFEFDENLNVANDYFLGNPEEIRKLMEAVANQGKKK.

Residues 8 to 15 (RHGESAWN), 21 to 22 (TG), Arg-60, 87 to 90 (EKHY), Lys-98, 114 to 115 (RR), and 183 to 184 (GN) contribute to the substrate site. His-9 (tele-phosphohistidine intermediate) is an active-site residue. Glu-87 (proton donor/acceptor) is an active-site residue.

The protein belongs to the phosphoglycerate mutase family. BPG-dependent PGAM subfamily.

It catalyses the reaction (2R)-2-phosphoglycerate = (2R)-3-phosphoglycerate. It functions in the pathway carbohydrate degradation; glycolysis; pyruvate from D-glyceraldehyde 3-phosphate: step 3/5. In terms of biological role, catalyzes the interconversion of 2-phosphoglycerate and 3-phosphoglycerate. The chain is 2,3-bisphosphoglycerate-dependent phosphoglycerate mutase 2 from Bacteroides thetaiotaomicron (strain ATCC 29148 / DSM 2079 / JCM 5827 / CCUG 10774 / NCTC 10582 / VPI-5482 / E50).